Reading from the N-terminus, the 436-residue chain is Deoxyuridine 5'-triphosphate nucleotidohydrolase (436 aa).

Residues 328-330 (RSS) and 431-432 (FG) each bind substrate.

Belongs to the dUTPase family. The cofactor is Mg(2+).

It carries out the reaction dUTP + H2O = dUMP + diphosphate + H(+). In terms of biological role, involved in nucleotide metabolism: produces dUMP, the immediate precursor of thymidine nucleotides and decreases the intracellular concentration of dUTP to avoid uracil incorporation into viral DNA. This chain is Deoxyuridine 5'-triphosphate nucleotidohydrolase, found in Gallid herpesvirus 2 (strain Chicken/Md5/ATCC VR-987) (GaHV-2).